The chain runs to 256 residues: 5-oxoprolinase subunit A (256 aa).

This sequence belongs to the LamB/PxpA family. In terms of assembly, forms a complex composed of PxpA, PxpB and PxpC.

The catalysed reaction is 5-oxo-L-proline + ATP + 2 H2O = L-glutamate + ADP + phosphate + H(+). Functionally, catalyzes the cleavage of 5-oxoproline to form L-glutamate coupled to the hydrolysis of ATP to ADP and inorganic phosphate. The chain is 5-oxoprolinase subunit A from Azoarcus sp. (strain BH72).